The sequence spans 213 residues: Thymidine kinase (213 aa).

ATP is bound by residues 20–27 and 93–96; these read GPMFSGKT and DEAQ. Glutamate 94 (proton acceptor) is an active-site residue. Positions 150, 153, 185, and 188 each coordinate Zn(2+).

It belongs to the thymidine kinase family. Homotetramer.

The protein localises to the cytoplasm. The catalysed reaction is thymidine + ATP = dTMP + ADP + H(+). This chain is Thymidine kinase, found in Mycoplasma genitalium (strain ATCC 33530 / DSM 19775 / NCTC 10195 / G37) (Mycoplasmoides genitalium).